Consider the following 284-residue polypeptide: Pantothenate synthetase (284 aa).

Residue 30–37 coordinates ATP; sequence MGNLHDGH. His-37 serves as the catalytic Proton donor. Gln-61 is a binding site for (R)-pantoate. A beta-alanine-binding site is contributed by Gln-61. Residue 149–152 coordinates ATP; sequence GEKD. Gln-155 is a (R)-pantoate binding site. ATP-binding positions include Ile-178 and 186–189; that span reads LSSR.

Belongs to the pantothenate synthetase family. In terms of assembly, homodimer.

The protein resides in the cytoplasm. It carries out the reaction (R)-pantoate + beta-alanine + ATP = (R)-pantothenate + AMP + diphosphate + H(+). Its pathway is cofactor biosynthesis; (R)-pantothenate biosynthesis; (R)-pantothenate from (R)-pantoate and beta-alanine: step 1/1. In terms of biological role, catalyzes the condensation of pantoate with beta-alanine in an ATP-dependent reaction via a pantoyl-adenylate intermediate. The protein is Pantothenate synthetase of Salmonella choleraesuis (strain SC-B67).